The chain runs to 798 residues: Cold shock domain-containing protein E1 (798 aa).

The CSD 1 domain occupies 26 to 87; it reads ETGVIEKLLT…RTGKPIAIKL (62 aa). Lys81 carries the post-translational modification N6-acetyllysine. A Glycyl lysine isopeptide (Lys-Gly) (interchain with G-Cter in SUMO2) cross-link involves residue Lys91. Ser123 is modified (phosphoserine). The region spanning 136–179 is the CSD 2; truncated domain; that stretch reads VFYLTYTSEDVEGNVQLETGDKINFVIDNNKHTGAVSARNIMLL. Residues 186–245 enclose the CSD 3 domain; the sequence is YQGVVCAMKEAFGFIERGDVVKEIFFHYSEFKGDLETLQPGDDVEFTIKDRNGKEVATDV. Ser276 carries the post-translational modification Phosphoserine. Positions 297–337 constitute a CSD 4; truncated domain; it reads LPFGDKDTKSKVTLLEGDHVRFNISTDRRDKLERATNIEVL. CSD domains are found at residues 349–410 and 447–507; these read EMGV…AIRI and NKGK…ATCV. Ser514 is modified (phosphoserine). Residues 519–579 form the CSD 7 domain; it reads LLGYVATLKD…KGNKVSAEKV (61 aa). Ser584 is subject to Phosphoserine. CSD domains follow at residues 610 to 670 and 674 to 735; these read PTQI…AYNI and RRAT…ACNV. An SUZ-C domain is found at 748-789; it reads PRPDRLVNRLKNITLDDASAPRLMVLRQPRGPDNSMGFGAER. Position 761 is a phosphothreonine (Thr761).

The protein belongs to the UNR family. As to quaternary structure, component of a multi subunit autoregulatory ribonucleoprotein complex (ARC), at least composed of IGF2BP1, PABPC1 and CSDE1. Interacts with STRAP. Part of a complex associated with the FOS mCRD domain and consisting of PABPC1, PAIP1, HNRPD and SYNCRIP. The interaction with PABPC1 is direct and RNA-independent. Interacts with EIF4ENIF1/4E-T.

The protein resides in the cytoplasm. Its subcellular location is the stress granule. It localises to the P-body. Its function is as follows. RNA-binding protein involved in translationally coupled mRNA turnover. Implicated with other RNA-binding proteins in the cytoplasmic deadenylation/translational and decay interplay of the FOS mRNA mediated by the major coding-region determinant of instability (mCRD) domain. Required for efficient formation of stress granules. The chain is Cold shock domain-containing protein E1 from Rattus norvegicus (Rat).